The primary structure comprises 189 residues: Large ribosomal subunit protein bL17 (189 aa).

Belongs to the bacterial ribosomal protein bL17 family. As to quaternary structure, part of the 50S ribosomal subunit. Contacts protein L32.

The protein is Large ribosomal subunit protein bL17 of Rhodococcus jostii (strain RHA1).